Reading from the N-terminus, the 567-residue chain is 2-succinyl-5-enolpyruvyl-6-hydroxy-3-cyclohexene-1-carboxylate synthase (567 aa).

Belongs to the TPP enzyme family. MenD subfamily. Homodimer. It depends on Mg(2+) as a cofactor. Mn(2+) serves as cofactor. The cofactor is thiamine diphosphate.

It catalyses the reaction isochorismate + 2-oxoglutarate + H(+) = 5-enolpyruvoyl-6-hydroxy-2-succinyl-cyclohex-3-ene-1-carboxylate + CO2. It functions in the pathway quinol/quinone metabolism; 1,4-dihydroxy-2-naphthoate biosynthesis; 1,4-dihydroxy-2-naphthoate from chorismate: step 2/7. It participates in quinol/quinone metabolism; menaquinone biosynthesis. Functionally, catalyzes the thiamine diphosphate-dependent decarboxylation of 2-oxoglutarate and the subsequent addition of the resulting succinic semialdehyde-thiamine pyrophosphate anion to isochorismate to yield 2-succinyl-5-enolpyruvyl-6-hydroxy-3-cyclohexene-1-carboxylate (SEPHCHC). In Yersinia pseudotuberculosis serotype I (strain IP32953), this protein is 2-succinyl-5-enolpyruvyl-6-hydroxy-3-cyclohexene-1-carboxylate synthase.